The chain runs to 255 residues: Ribonuclease HII (255 aa).

Residues 72–255 (RLIAGVDEAG…KTFAPVQSYC (184 aa)) enclose the RNase H type-2 domain. Positions 78, 79, and 170 each coordinate a divalent metal cation.

Belongs to the RNase HII family. The cofactor is Mn(2+). Mg(2+) is required as a cofactor.

Its subcellular location is the cytoplasm. It catalyses the reaction Endonucleolytic cleavage to 5'-phosphomonoester.. Its function is as follows. Endonuclease that specifically degrades the RNA of RNA-DNA hybrids. This chain is Ribonuclease HII, found in Bacillus velezensis (strain DSM 23117 / BGSC 10A6 / LMG 26770 / FZB42) (Bacillus amyloliquefaciens subsp. plantarum).